A 657-amino-acid chain; its full sequence is Splicing factor Cactin (657 aa).

The span at 1-15 (MGKDSKKHKKERRRE) shows a compositional bias: basic residues. Disordered regions lie at residues 1-83 (MGKD…EDTL), 369-406 (QESE…ISKK), and 472-503 (ADVD…QGAS). 2 coiled-coil regions span residues 23–77 (SDEE…RKDA) and 352–403 (RLQL…DEKI). The segment covering 26-60 (ERLQKRLAEQRSLKKDEKRRQKEEMKKNESAEEKR) has biased composition (basic and acidic residues). Positions 61–72 (ARRMEKKMRKDA) are enriched in basic residues. Residues 389–401 (EEEEEEEEDEDDE) are compositionally biased toward acidic residues. Positions 489-503 (PSSSAASSGAPQGAS) are enriched in low complexity.

This sequence belongs to the CACTIN family. Expressed in pharynx, intestine, vulva and spermatheca (at protein level).

Its subcellular location is the nucleus. The protein resides in the cytoplasm. Plays a role in pre-mRNA splicing by facilitating excision of a subset of introns. Plays a role during early embryonic development. Required for the distal tip cell migration at the end of larval development and for gonad morphogenesis. The sequence is that of Splicing factor Cactin (cacn-1) from Caenorhabditis elegans.